Consider the following 540-residue polypeptide: Glucose-6-phosphate isomerase (540 aa).

Residue E350 is the Proton donor of the active site. Catalysis depends on residues H381 and K503.

The protein belongs to the GPI family.

It localises to the cytoplasm. It catalyses the reaction alpha-D-glucose 6-phosphate = beta-D-fructose 6-phosphate. The protein operates within carbohydrate biosynthesis; gluconeogenesis. It functions in the pathway carbohydrate degradation; glycolysis; D-glyceraldehyde 3-phosphate and glycerone phosphate from D-glucose: step 2/4. Its function is as follows. Catalyzes the reversible isomerization of glucose-6-phosphate to fructose-6-phosphate. This is Glucose-6-phosphate isomerase from Burkholderia ambifaria (strain MC40-6).